The chain runs to 628 residues: Leucine-rich repeat and fibronectin type-III domain-containing protein 3 (628 aa).

The first 16 residues, 1 to 16 (MAILPLLLCLLPLAPA), serve as a signal peptide directing secretion. The Extracellular portion of the chain corresponds to 17–539 (SSPPQSATPS…PHAPFLGGTM (523 aa)). In terms of domain architecture, LRRNT spans 19–59 (PPQSATPSPCPRRCRCQTQSLPLSVLCPGAGLLFVPPSLDR). 7 LRR repeats span residues 60–83 (RAAE…ANMT), 84–105 (GLLH…AFAD), 108–129 (ALRA…QLRG), 132–153 (NLRH…ALDD), 157–178 (TLED…ALGR), 181–202 (NVNT…AFSR), and 205–226 (KLAR…PLFS). Residue N81 is glycosylated (N-linked (GlcNAc...) asparagine). Residues 249-295 (NPLHCNCELVWLRRLAREDDLEACASPPALGGRYFWAVGEEEFVCEP) form the LRRCT domain. Residues 295 to 382 (PPVVTHRSPP…GEATAAVELT (88 aa)) enclose the Ig-like domain. C317 and C366 are oxidised to a cystine. N339, N348, and N393 each carry an N-linked (GlcNAc...) asparagine glycan. Residues 382–430 (TVGPPPPPQLANSTSCDPPRDGDPDALTPPSAASASAKVADTGPPTDRG) are disordered. A compositionally biased stretch (low complexity) spans 406–422 (DALTPPSAASASAKVAD). The region spanning 425 to 523 (PPTDRGVQVT…GCARFSTEPA (99 aa)) is the Fibronectin type-III domain. N462 carries N-linked (GlcNAc...) asparagine glycosylation. Residues 540-560 (IIALGGVIVASVLVFIFVLLM) traverse the membrane as a helical segment. The Cytoplasmic portion of the chain corresponds to 561–628 (RYKVHGGQPP…WGPGHEPVGP (68 aa)).

It belongs to the LRFN family. Can form heteromeric complexes with LRFN1, LRFN2, LRFN4 and LRFN5. Able to form homomeric complexes across cell junctions, between adjacent cells. Does not interact with DLG4. Post-translationally, N-glycosylated.

It is found in the cell membrane. The protein localises to the cell projection. The protein resides in the axon. Its subcellular location is the dendrite. It localises to the synapse. It is found in the presynaptic cell membrane. The protein localises to the postsynaptic cell membrane. Its function is as follows. Cell adhesion molecule that mediates homophilic cell-cell adhesion in a Ca(2+)-independent manner. Promotes neurite outgrowth in hippocampal neurons. The polypeptide is Leucine-rich repeat and fibronectin type-III domain-containing protein 3 (LRFN3) (Homo sapiens (Human)).